The chain runs to 342 residues: Anthranilate phosphoribosyltransferase (342 aa).

Residues Gly81, 84–85 (GD), Thr89, 91–94 (NVST), 109–117 (KHGNRAASS), and Ala121 each bind 5-phospho-alpha-D-ribose 1-diphosphate. Gly81 lines the anthranilate pocket. A Mg(2+)-binding site is contributed by Ser93. Anthranilate is bound at residue Asn112. Arg167 contributes to the anthranilate binding site. Mg(2+) contacts are provided by Asp226 and Glu227.

The protein belongs to the anthranilate phosphoribosyltransferase family. In terms of assembly, homodimer. Mg(2+) serves as cofactor.

The enzyme catalyses N-(5-phospho-beta-D-ribosyl)anthranilate + diphosphate = 5-phospho-alpha-D-ribose 1-diphosphate + anthranilate. It functions in the pathway amino-acid biosynthesis; L-tryptophan biosynthesis; L-tryptophan from chorismate: step 2/5. In terms of biological role, catalyzes the transfer of the phosphoribosyl group of 5-phosphorylribose-1-pyrophosphate (PRPP) to anthranilate to yield N-(5'-phosphoribosyl)-anthranilate (PRA). This is Anthranilate phosphoribosyltransferase from Beijerinckia indica subsp. indica (strain ATCC 9039 / DSM 1715 / NCIMB 8712).